Here is a 369-residue protein sequence, read N- to C-terminus: Short chain dehydrogenase rstn4 (369 aa).

NADP(+) is bound by residues Lys88, Asp111, Asn138, Tyr234, and Lys238. Tyr234 serves as the catalytic Proton donor. Lys238 (lowers pKa of active site Tyr) is an active-site residue.

This sequence belongs to the short-chain dehydrogenases/reductases (SDR) family.

It participates in antifungal biosynthesis. Short chain dehydrogenase; part of the gene cluster that mediates the biosynthesis of the tetrahydropyranyl antifungal agent restricticin that acts as an inhibitor of CYP51 and blocks the ergosterol biosynthesis. The highly reducing polyketide synthase rstn3, the short chain dehydrogenase rstn4, the cyclase rstn5, the FAD-dependent monooxygenase rstn6 and the enoylreductase rstn7 are required to generate the first stable intermediate desmethylrestrictinol. Rstn3 with rstn7 biosynthesize the first polyketide chain intermediate that is reduced by rstn4, followed by epoxidation by rstn6 before 6-endo cyclization via epoxide opening by rstn5 leads to desmethylrestrictinol. The methyltransferase rstn1 then catalyzes the C4 O-methylation of desmethylrestrictinol to produce restrictinol, and the nonribosomal peptide synthetase rstn8 catalyzes the C3 esterification of restrictinol with glycine that leads to restricticin. In Aspergillus nomiae NRRL (strain ATCC 15546 / NRRL 13137 / CBS 260.88 / M93), this protein is Short chain dehydrogenase rstn4.